Reading from the N-terminus, the 463-residue chain is uncharacterized protein (463 aa).

Belongs to the mycobacterial PPE family.

This is an uncharacterized protein from Mycobacterium tuberculosis (strain ATCC 25618 / H37Rv).